We begin with the raw amino-acid sequence, 424 residues long: Trigger factor (424 aa).

One can recognise a PPIase FKBP-type domain in the interval 163-248 (GDTVVLDFEG…IHEIKAKELP (86 aa)).

It belongs to the FKBP-type PPIase family. Tig subfamily.

Its subcellular location is the cytoplasm. It carries out the reaction [protein]-peptidylproline (omega=180) = [protein]-peptidylproline (omega=0). In terms of biological role, involved in protein export. Acts as a chaperone by maintaining the newly synthesized protein in an open conformation. Functions as a peptidyl-prolyl cis-trans isomerase. This chain is Trigger factor, found in Bacillus pumilus (strain SAFR-032).